Reading from the N-terminus, the 145-residue chain is Natriuretic peptides A (145 aa).

The N-terminal stretch at Met-1 to Gly-23 is a signal peptide. Positions Gly-24–Arg-117 are excised as a propeptide. Residues Cys-125 and Cys-141 are joined by a disulfide bond.

It belongs to the natriuretic peptide family. Post-translationally, cleaved upon secretion to produce the functional hormone.

The protein localises to the secreted. Its function is as follows. Hormone playing a key role in cardiovascular homeostasis through regulation of natriuresis, diuresis, and vasodilation. Has a cGMP-stimulating activity. This is Natriuretic peptides A from Aquarana catesbeiana (American bullfrog).